Here is a 365-residue protein sequence, read N- to C-terminus: GDSL lipase (365 aa).

The N-terminal stretch at 1–27 is a signal peptide; that stretch reads MAVASRKLGALVLVAVLCLSLPTGCLS. The Nucleophile role is filled by Ser40. N-linked (GlcNAc...) asparagine glycosylation is found at Asn189 and Asn310. Catalysis depends on charge relay system residues Asp318 and His321.

This sequence belongs to the 'GDSL' lipolytic enzyme family. As to expression, restricted to the pericarp during achene maturation. Expressed in the leaves of mature plants and seedlings, as well as in buds and flowers. Present in disk florets.

The protein localises to the secreted. It is found in the extracellular space. It carries out the reaction (Z,S)-pyrethrolone + (1R,3R)-chrysanthemoyl-CoA = pyrethrin I + CoA. The enzyme catalyses (Z,S)-pyrethrolone + (1R,3R)-pyrethroyl-CoA = pyrethrin II + CoA. The catalysed reaction is (Z,S)-jasmololone + (1R,3R)-chrysanthemoyl-CoA = jasmolin I + CoA. It catalyses the reaction (Z,S)-cinerolone + (1R,3R)-chrysanthemoyl-CoA = cinerin I + CoA. It carries out the reaction (Z,S)-jasmololone + (1R,3R)-pyrethroyl-CoA = jasmolin II + CoA. The enzyme catalyses (Z,S)-cinerolone + (1R,3R)-pyrethroyl-CoA = cinerin II + CoA. It participates in isoprenoid biosynthesis. In terms of biological role, component of the monoterpenoid pyrethrins biosynthesis; pyrethrins are widely used plant-derived pesticide. Acyltransferase that catalyzes the esterification of terpene acids and lipid alcohol substrates into pyrethrins; mediates the transfer of a chrysanthemoyl moiety from the coenzyme A (CoA) thio-ester chrysanthemoyl CoA to pyrethrolone, and, to a lower extent, to jasmololone and cinerolone thus producing pyrethrins (e.g. pyrethrin type I). Can also use pyrethroyl CoA as substrate. Also has esterase activity, being able to cleave the ester bond of pyrethrin I, p-nitrophenyl butanoate and p-nitrophenyl octanoate to produce pyrethrolone and p-nitrophenol, respectively. This is GDSL lipase from Tanacetum cinerariifolium (Dalmatian daisy).